We begin with the raw amino-acid sequence, 390 residues long: MGIKGLAKLLSDEAPLSLKEVPLSHLHGRKLAIDASMAIYQFLIAVRSGGPGGQNAAMMLTNADGETTSHIQGIFNRTIRFISEGIRPVYVFDGKPPQFKSGELLKRREKRLKAEQALKAAEESGNIEEQDKQSKRLVRAGTKENEDCIKLLTLMGVPVIRAPCEAEAQAAALARSGKVYAAATEDMDALTFRSPVMVRKMTFANASKSDVQQIFYDKAIEGLEITHDQFVDLCILLGCDYCDTIKGIGPKTALKLIREHKNIETILKHLNREKYVVPDIYVEARRLFNHHEVLPDNEIELKWTECQPEPLKSFLVDEMGFNPDRVQASIEKLQKAFKASAKPQSRMDSFFKVKANPEGDKKKAEKRKAELAASRGKGKKGKGGGGFKKK.

Residues 1-111 (MGIKGLAKLL…GELLKRREKR (111 aa)) are N-domain. D34 serves as a coordination point for Mg(2+). 2 residues coordinate DNA: R47 and R77. Mg(2+) contacts are provided by D93, E165, E167, D186, and D188. Residues 129–260 (EQDKQSKRLV…KTALKLIREH (132 aa)) form an I-domain region. E165 contacts DNA. Residues G238 and D240 each contribute to the DNA site. D240 is a Mg(2+) binding site. The segment at 342–390 (KPQSRMDSFFKVKANPEGDKKKAEKRKAELAASRGKGKKGKGGGGFKKK) is disordered. An interaction with PCNA region spans residues 343–351 (PQSRMDSFF). A compositionally biased stretch (basic and acidic residues) spans 349–370 (SFFKVKANPEGDKKKAEKRKAE). Positions 376–390 (GKGKKGKGGGGFKKK) are enriched in basic residues.

Belongs to the XPG/RAD2 endonuclease family. FEN1 subfamily. Interacts with PCNA. Three molecules of FEN1 bind to one PCNA trimer with each molecule binding to one PCNA monomer. PCNA stimulates the nuclease activity without altering cleavage specificity. Mg(2+) serves as cofactor. Post-translationally, phosphorylated. Phosphorylation upon DNA damage induces relocalization to the nuclear plasma.

Its subcellular location is the nucleus. It is found in the nucleolus. The protein resides in the nucleoplasm. The protein localises to the mitochondrion. Functionally, structure-specific nuclease with 5'-flap endonuclease and 5'-3' exonuclease activities involved in DNA replication and repair. During DNA replication, cleaves the 5'-overhanging flap structure that is generated by displacement synthesis when DNA polymerase encounters the 5'-end of a downstream Okazaki fragment. It enters the flap from the 5'-end and then tracks to cleave the flap base, leaving a nick for ligation. Also involved in the long patch base excision repair (LP-BER) pathway, by cleaving within the apurinic/apyrimidinic (AP) site-terminated flap. Acts as a genome stabilization factor that prevents flaps from equilibrating into structures that lead to duplications and deletions. Also possesses 5'-3' exonuclease activity on nicked or gapped double-stranded DNA, and exhibits RNase H activity. Also involved in replication and repair of rDNA and in repairing mitochondrial DNA. In Thalassiosira pseudonana (Marine diatom), this protein is Flap endonuclease 1.